Reading from the N-terminus, the 172-residue chain is Oleosin 18 kDa (172 aa).

The residue at position 2 (Ala-2) is an N-acetylalanine. Positions 2 to 38 are polar; the sequence is ADRDRAGQYYQQQRGQVGETVKGILPEKAPSASQALT. The interval 39–110 is hydrophobic; sequence VATLFPLGGL…GGLSSLTFLA (72 aa). 3 helical membrane passes run 42-62, 70-90, and 91-111; these read LFPL…ASVV, VFLI…LAVA, and GFLT…FLAN. The disordered stretch occupies residues 147-172; it reads HAIQGRADQAGTGAGAGGGAGTKTSS. The segment covering 158-172 has biased composition (gly residues); the sequence is TGAGAGGGAGTKTSS.

Belongs to the oleosin family.

Its subcellular location is the lipid droplet. It is found in the membrane. In terms of biological role, may have a structural role to stabilize the lipid body during desiccation of the seed by preventing coalescence of the oil. Probably interacts with both lipid and phospholipid moieties of lipid bodies. May also provide recognition signals for specific lipase anchorage in lipolysis during seedling growth. This chain is Oleosin 18 kDa (OLE18), found in Oryza sativa subsp. indica (Rice).